Here is a 359-residue protein sequence, read N- to C-terminus: Aromatic amino acid aminotransferase (359 aa).

The segment at 1-42 (MSERKPPYLRSALDSIPPYRPGRKVVGPDGRSAKLSSNESPF) is disordered. Lysine 223 carries the N6-(pyridoxal phosphate)lysine modification.

Belongs to the class-II pyridoxal-phosphate-dependent aminotransferase family. As to quaternary structure, homodimer. Requires pyridoxal 5'-phosphate as cofactor.

The catalysed reaction is an aromatic L-alpha-amino acid + 2-oxoglutarate = an aromatic oxo-acid + L-glutamate. Functionally, aminotransferase that catalyzes the conversion of aromatic amino acids and 2-oxoglutarate into corresponding aromatic oxo acids and L-glutamate. In Thermobifida fusca (strain YX), this protein is Aromatic amino acid aminotransferase.